Reading from the N-terminus, the 57-residue chain is Large ribosomal subunit protein bL32 (57 aa).

This sequence belongs to the bacterial ribosomal protein bL32 family.

The chain is Large ribosomal subunit protein bL32 from Ureaplasma parvum serovar 3 (strain ATCC 27815 / 27 / NCTC 11736).